A 395-amino-acid chain; its full sequence is Neuromedin-U receptor 2 (395 aa).

Residues M1–S41 are Extracellular-facing. N-linked (GlcNAc...) asparagine glycosylation is found at N6 and N19. Residues V42 to I62 traverse the membrane as a helical segment. Topologically, residues V63 to Y74 are cytoplasmic. Residues Y75 to I95 form a helical membrane-spanning segment. Topologically, residues Y96–T115 are extracellular. The cysteines at positions 111 and 196 are disulfide-linked. The chain crosses the membrane as a helical span at residues A116–V138. Topologically, residues A139–R157 are cytoplasmic. Residues I158–G178 form a helical membrane-spanning segment. The Extracellular segment spans residues I179–T212. An N-linked (GlcNAc...) asparagine glycan is attached at N186. Residues S213–L233 traverse the membrane as a helical segment. The Cytoplasmic segment spans residues R234–S257. Residues V258–V278 form a helical membrane-spanning segment. The Extracellular portion of the chain corresponds to D279–L293. Residues A294–V314 traverse the membrane as a helical segment. Over N315–P395 the chain is Cytoplasmic. Positions F374–P395 are disordered. Positions P375–T387 are enriched in polar residues.

This sequence belongs to the G-protein coupled receptor 1 family. As to expression, the highest level is detected in the uterus. In the central nervous system, high expression levels were found in the hypothalamus and moderate levels in both the medulla oblongata and spinal cord. Expressed in the hypothalamic paraventricular nucleus (PVN) and suprachiasmatic nuclei (SCN) of the hypothalamus. Expression is low in the gastrointestinal tract. In other peripheral tissues, moderate expression was observed in the lung and ovary.

It is found in the cell membrane. Receptor for the neuromedin-U and neuromedin-S neuropeptides. The protein is Neuromedin-U receptor 2 (Nmur2) of Rattus norvegicus (Rat).